The primary structure comprises 261 residues: uncharacterized protein (261 aa).

In terms of domain architecture, N-acetyltransferase spans 135-261; sequence LVLKRIDEDI…VTEYTIYYSG (127 aa).

It belongs to the acetyltransferase family.

This is an uncharacterized protein from Bacillus subtilis (strain 168).